We begin with the raw amino-acid sequence, 297 residues long: Protease HtpX homolog (297 aa).

A helical transmembrane segment spans residues 16–36 (IFMAIGFLVGGMAGMILAFVV). A Zn(2+)-binding site is contributed by histidine 134. Glutamate 135 is a catalytic residue. Histidine 138 contacts Zn(2+). 2 helical membrane-spanning segments follow: residues 147–167 (MTVT…ALFF) and 175–195 (IGSI…QMAI). Glutamate 200 is a binding site for Zn(2+).

The protein belongs to the peptidase M48B family. Requires Zn(2+) as cofactor.

The protein resides in the cell inner membrane. This is Protease HtpX homolog from Hyphomonas neptunium (strain ATCC 15444).